We begin with the raw amino-acid sequence, 269 residues long: Major capsid protein P2 (269 aa).

As to quaternary structure, homotrimer.

Its subcellular location is the virion. Its function is as follows. Major capsid protein. The chain is Major capsid protein P2 (II) from Pseudoalteromonas phage PM2 (Bacteriophage PM2).